Reading from the N-terminus, the 345-residue chain is Phosphoribosylformylglycinamidine cyclo-ligase (345 aa).

Belongs to the AIR synthase family.

Its subcellular location is the cytoplasm. The catalysed reaction is 2-formamido-N(1)-(5-O-phospho-beta-D-ribosyl)acetamidine + ATP = 5-amino-1-(5-phospho-beta-D-ribosyl)imidazole + ADP + phosphate + H(+). It functions in the pathway purine metabolism; IMP biosynthesis via de novo pathway; 5-amino-1-(5-phospho-D-ribosyl)imidazole from N(2)-formyl-N(1)-(5-phospho-D-ribosyl)glycinamide: step 2/2. This Shewanella putrefaciens (strain CN-32 / ATCC BAA-453) protein is Phosphoribosylformylglycinamidine cyclo-ligase.